We begin with the raw amino-acid sequence, 99 residues long: DNA-directed RNA polymerase subunit omega (99 aa).

It belongs to the RNA polymerase subunit omega family. As to quaternary structure, the RNAP catalytic core consists of 2 alpha, 1 beta, 1 beta' and 1 omega subunit. When a sigma factor is associated with the core the holoenzyme is formed, which can initiate transcription.

The enzyme catalyses RNA(n) + a ribonucleoside 5'-triphosphate = RNA(n+1) + diphosphate. Its function is as follows. Promotes RNA polymerase assembly. Latches the N- and C-terminal regions of the beta' subunit thereby facilitating its interaction with the beta and alpha subunits. This chain is DNA-directed RNA polymerase subunit omega, found in Stenotrophomonas maltophilia (strain K279a).